We begin with the raw amino-acid sequence, 426 residues long: Glucose-1-phosphate adenylyltransferase (426 aa).

Alpha-D-glucose 1-phosphate-binding positions include Gly165, 180–181 (EK), and Ser191.

Belongs to the bacterial/plant glucose-1-phosphate adenylyltransferase family. In terms of assembly, homotetramer.

The enzyme catalyses alpha-D-glucose 1-phosphate + ATP + H(+) = ADP-alpha-D-glucose + diphosphate. The protein operates within glycan biosynthesis; glycogen biosynthesis. Involved in the biosynthesis of ADP-glucose, a building block required for the elongation reactions to produce glycogen. Catalyzes the reaction between ATP and alpha-D-glucose 1-phosphate (G1P) to produce pyrophosphate and ADP-Glc. The polypeptide is Glucose-1-phosphate adenylyltransferase (Ruminiclostridium cellulolyticum (strain ATCC 35319 / DSM 5812 / JCM 6584 / H10) (Clostridium cellulolyticum)).